Reading from the N-terminus, the 360-residue chain is Phospho-N-acetylmuramoyl-pentapeptide-transferase (360 aa).

The next 10 membrane-spanning stretches (helical) occupy residues 27–47, 72–92, 94–114, 132–152, 168–188, 199–219, 235–255, 263–283, 288–308, and 338–358; these read IVSLLTALFLSLWMGPRLIAW, PTMGGLMILTSITISVLMWAY, SNPYVWCVLFVLVGYGIVGFI, WKYFWQSVIALAVAFTMFAVG, IMPQLGLWYVLLAYFVIVGTS, GLAIMPTVFVAAGLALVAWAT, FAGELVVVCTAIVGAGLGFLW, VFMGDVGSLALGGALGTIAVL, FLLLIMGGVFVVETLSVILQV, and VIVRFWIISLMLVLIGLATLK.

This sequence belongs to the glycosyltransferase 4 family. MraY subfamily. Mg(2+) serves as cofactor.

It localises to the cell inner membrane. It catalyses the reaction UDP-N-acetyl-alpha-D-muramoyl-L-alanyl-gamma-D-glutamyl-meso-2,6-diaminopimeloyl-D-alanyl-D-alanine + di-trans,octa-cis-undecaprenyl phosphate = di-trans,octa-cis-undecaprenyl diphospho-N-acetyl-alpha-D-muramoyl-L-alanyl-D-glutamyl-meso-2,6-diaminopimeloyl-D-alanyl-D-alanine + UMP. It functions in the pathway cell wall biogenesis; peptidoglycan biosynthesis. Functionally, catalyzes the initial step of the lipid cycle reactions in the biosynthesis of the cell wall peptidoglycan: transfers peptidoglycan precursor phospho-MurNAc-pentapeptide from UDP-MurNAc-pentapeptide onto the lipid carrier undecaprenyl phosphate, yielding undecaprenyl-pyrophosphoryl-MurNAc-pentapeptide, known as lipid I. The protein is Phospho-N-acetylmuramoyl-pentapeptide-transferase of Sodalis glossinidius (strain morsitans).